The sequence spans 347 residues: Aromatic amino acid aminotransferase (347 aa).

Lysine 214 is modified (N6-(pyridoxal phosphate)lysine).

The protein belongs to the class-II pyridoxal-phosphate-dependent aminotransferase family. Homodimer. Pyridoxal 5'-phosphate is required as a cofactor.

The enzyme catalyses an aromatic L-alpha-amino acid + 2-oxoglutarate = an aromatic oxo-acid + L-glutamate. In terms of biological role, aminotransferase that catalyzes the conversion of aromatic amino acids and 2-oxoglutarate into corresponding aromatic oxo acids and L-glutamate. The chain is Aromatic amino acid aminotransferase from Mycobacteroides abscessus (strain ATCC 19977 / DSM 44196 / CCUG 20993 / CIP 104536 / JCM 13569 / NCTC 13031 / TMC 1543 / L948) (Mycobacterium abscessus).